The sequence spans 75 residues: MEEITFEKAMERLEEIVDLMNQPSTSLDASLKFYEEADALMRICESRIRKAEERVRELSEKRNEDFLSEEESFVH.

It belongs to the XseB family. As to quaternary structure, heterooligomer composed of large and small subunits.

The protein localises to the cytoplasm. The enzyme catalyses Exonucleolytic cleavage in either 5'- to 3'- or 3'- to 5'-direction to yield nucleoside 5'-phosphates.. Its function is as follows. Bidirectionally degrades single-stranded DNA into large acid-insoluble oligonucleotides, which are then degraded further into small acid-soluble oligonucleotides. The protein is Exodeoxyribonuclease 7 small subunit of Chlamydia abortus (strain DSM 27085 / S26/3) (Chlamydophila abortus).